The chain runs to 72 residues: uncharacterized protein (72 aa).

This is an uncharacterized protein from Dictyostelium discoideum (Social amoeba).